The following is a 267-amino-acid chain: Diphthine synthase (267 aa).

S-adenosyl-L-methionine-binding positions include L9, D87, I90, 115-116, L166, L205, and H230; that span reads SI.

It belongs to the diphthine synthase family. Homodimer.

The enzyme catalyses 2-[(3S)-amino-3-carboxypropyl]-L-histidyl-[translation elongation factor 2] + 3 S-adenosyl-L-methionine = diphthine-[translation elongation factor 2] + 3 S-adenosyl-L-homocysteine + 3 H(+). The protein operates within protein modification; peptidyl-diphthamide biosynthesis. Functionally, S-adenosyl-L-methionine-dependent methyltransferase that catalyzes the trimethylation of the amino group of the modified target histidine residue in translation elongation factor 2 (EF-2), to form an intermediate called diphthine. The three successive methylation reactions represent the second step of diphthamide biosynthesis. The chain is Diphthine synthase from Staphylothermus marinus (strain ATCC 43588 / DSM 3639 / JCM 9404 / F1).